Reading from the N-terminus, the 132-residue chain is Small ribosomal subunit protein uS8 (132 aa).

Belongs to the universal ribosomal protein uS8 family. In terms of assembly, part of the 30S ribosomal subunit. Contacts proteins S5 and S12.

In terms of biological role, one of the primary rRNA binding proteins, it binds directly to 16S rRNA central domain where it helps coordinate assembly of the platform of the 30S subunit. The chain is Small ribosomal subunit protein uS8 from Listeria innocua serovar 6a (strain ATCC BAA-680 / CLIP 11262).